The chain runs to 250 residues: Probable dihydroorotate dehydrogenase B (NAD(+)), electron transfer subunit (250 aa).

Residues 1-89 (MNRITVDQVR…RGPYGNGFQI (89 aa)) form the FAD-binding FR-type domain. 4 residues coordinate [2Fe-2S] cluster: Cys-200, Cys-205, Cys-208, and Cys-216.

This sequence belongs to the PyrK family. As to quaternary structure, heterotetramer of 2 PyrK and 2 PyrD type B subunits. [2Fe-2S] cluster serves as cofactor. FAD is required as a cofactor.

The protein operates within pyrimidine metabolism; UMP biosynthesis via de novo pathway; orotate from (S)-dihydroorotate (NAD(+) route): step 1/1. Its function is as follows. Responsible for channeling the electrons from the oxidation of dihydroorotate from the FMN redox center in the PyrD type B subunit to the ultimate electron acceptor NAD(+). This chain is Probable dihydroorotate dehydrogenase B (NAD(+)), electron transfer subunit, found in Thermoplasma acidophilum (strain ATCC 25905 / DSM 1728 / JCM 9062 / NBRC 15155 / AMRC-C165).